Consider the following 397-residue polypeptide: Gamma tubulin complex adapter mto2 (397 aa).

The segment covering 1–13 has biased composition (basic and acidic residues); that stretch reads MSEHNYQSDREVA. Disordered stretches follow at residues 1–44, 269–298, and 346–397; these read MSEH…WRAG, YTSSVDSSPQRMASDSYGRPSLHLNDPFPS, and RSDP…TPSP. Polar residues-rich tracts occupy residues 22–37, 269–281, 352–369, and 382–397; these read ASANQLSSNSRESTPR, YTSSVDSSPQRMA, RHVSNSTNKSSLHPSPTS, and SPASQSFPSLQDTPSP. Serine 366 and serine 396 each carry phosphoserine.

As to quaternary structure, interacts with mto1; the interaction is direct and required for efficient binding to the gamma-tubulin complex. Interacts with gamma tubulin complex subunits alp4, alp6 and gtb1.

It is found in the cytoplasm. It localises to the cytoskeleton. The protein localises to the microtubule organizing center. The protein resides in the spindle pole body. Its function is as follows. Acts together with mto1 to promote nucleation of at least a subset of cytoplasmic microtubules, by recruiting the gamma-tubulin complex to the interphase microtubule organizing center (iMTOC) and to the equatorial MTOC (eMTOC) during anaphase. Does not appear to be required for cytoplasmic astral microtubule nucleation from the spindle pole body (SPB). Required to establish the eMTOC, and thereby to tether the cytokinetic actin ring. The sequence is that of Gamma tubulin complex adapter mto2 from Schizosaccharomyces pombe (strain 972 / ATCC 24843) (Fission yeast).